Here is a 1297-residue protein sequence, read N- to C-terminus: Phosphoribosylformylglycinamidine synthase (1297 aa).

Residues 304-323 (PFPGAATGSGGEIRDEGATG) form a disordered region. ATP-binding positions include 307–318 (GAATGSGGEIRD) and A678. Mg(2+) is bound by residues D679, E718, N722, and D886. Residue S888 coordinates ATP. Residues 1043–1297 (RIAILREQGV…LFQNARVALG (255 aa)) form the Glutamine amidotransferase type-1 domain. Catalysis depends on C1137, which acts as the Nucleophile. Residues H1262 and E1264 contribute to the active site.

This sequence in the N-terminal section; belongs to the FGAMS family. Monomer.

It is found in the cytoplasm. It catalyses the reaction N(2)-formyl-N(1)-(5-phospho-beta-D-ribosyl)glycinamide + L-glutamine + ATP + H2O = 2-formamido-N(1)-(5-O-phospho-beta-D-ribosyl)acetamidine + L-glutamate + ADP + phosphate + H(+). The protein operates within purine metabolism; IMP biosynthesis via de novo pathway; 5-amino-1-(5-phospho-D-ribosyl)imidazole from N(2)-formyl-N(1)-(5-phospho-D-ribosyl)glycinamide: step 1/2. Functionally, phosphoribosylformylglycinamidine synthase involved in the purines biosynthetic pathway. Catalyzes the ATP-dependent conversion of formylglycinamide ribonucleotide (FGAR) and glutamine to yield formylglycinamidine ribonucleotide (FGAM) and glutamate. The chain is Phosphoribosylformylglycinamidine synthase from Histophilus somni (strain 129Pt) (Haemophilus somnus).